Here is a 218-residue protein sequence, read N- to C-terminus: Glutathione S-transferase Mu 2 (218 aa).

Residues 2–88 (PMTLGYWNIR…YIARKHNLCG (87 aa)) enclose the GST N-terminal domain. 7–8 (YW) is a binding site for glutathione. Residues Ser-27 and Ser-44 each carry the phosphoserine modification. Glutathione contacts are provided by residues 43 to 46 (RSQW), Lys-50, 59 to 60 (NL), and 72 to 73 (QS). In terms of domain architecture, GST C-terminal spans 90 to 208 (TEKEKIREDI…KSSRFLPRPV (119 aa)). Tyr-116 contributes to the substrate binding site.

It belongs to the GST superfamily. Mu family. As to quaternary structure, homodimer.

The protein resides in the cytoplasm. It catalyses the reaction RX + glutathione = an S-substituted glutathione + a halide anion + H(+). It carries out the reaction 11(S)-hydroxy-14(S),15(S)-epoxy-(5Z,8Z,12E)-eicosatrienoate + glutathione = (11S,15S)-dihydroxy-14(R)-S-glutathionyl-(5Z,8Z,12E)-eicosatrienoate. In terms of biological role, conjugation of reduced glutathione to a wide number of exogenous and endogenous hydrophobic electrophiles. Participates in the formation of novel hepoxilin regioisomers. Has activity toward aflatoxin B(1)-8,9-epoxide (AFBO). The chain is Glutathione S-transferase Mu 2 (GSTM2) from Macaca fascicularis (Crab-eating macaque).